A 355-amino-acid polypeptide reads, in one-letter code: UDP-N-acetylglucosamine--N-acetylmuramyl-(pentapeptide) pyrophosphoryl-undecaprenol N-acetylglucosamine transferase (355 aa).

UDP-N-acetyl-alpha-D-glucosamine-binding positions include 15–17 (TGG), N127, R163, S191, I244, 263–268 (ALTVSE), and Q288.

This sequence belongs to the glycosyltransferase 28 family. MurG subfamily.

It localises to the cell inner membrane. It carries out the reaction di-trans,octa-cis-undecaprenyl diphospho-N-acetyl-alpha-D-muramoyl-L-alanyl-D-glutamyl-meso-2,6-diaminopimeloyl-D-alanyl-D-alanine + UDP-N-acetyl-alpha-D-glucosamine = di-trans,octa-cis-undecaprenyl diphospho-[N-acetyl-alpha-D-glucosaminyl-(1-&gt;4)]-N-acetyl-alpha-D-muramoyl-L-alanyl-D-glutamyl-meso-2,6-diaminopimeloyl-D-alanyl-D-alanine + UDP + H(+). It functions in the pathway cell wall biogenesis; peptidoglycan biosynthesis. Its function is as follows. Cell wall formation. Catalyzes the transfer of a GlcNAc subunit on undecaprenyl-pyrophosphoryl-MurNAc-pentapeptide (lipid intermediate I) to form undecaprenyl-pyrophosphoryl-MurNAc-(pentapeptide)GlcNAc (lipid intermediate II). The chain is UDP-N-acetylglucosamine--N-acetylmuramyl-(pentapeptide) pyrophosphoryl-undecaprenol N-acetylglucosamine transferase from Citrobacter koseri (strain ATCC BAA-895 / CDC 4225-83 / SGSC4696).